The following is a 198-amino-acid chain: Recombination protein RecR (198 aa).

The C4-type zinc finger occupies 57–72 (CEKCNTFTEAQICEVC). The region spanning 80 to 175 (TLLCVVETPA…SVTRLARGVP (96 aa)) is the Toprim domain.

Belongs to the RecR family.

Its function is as follows. May play a role in DNA repair. It seems to be involved in an RecBC-independent recombinational process of DNA repair. It may act with RecF and RecO. This Paraburkholderia phymatum (strain DSM 17167 / CIP 108236 / LMG 21445 / STM815) (Burkholderia phymatum) protein is Recombination protein RecR.